The sequence spans 225 residues: Large ribosomal subunit protein uL1 (225 aa).

The protein belongs to the universal ribosomal protein uL1 family. In terms of assembly, part of the 50S ribosomal subunit.

Functionally, binds directly to 23S rRNA. The L1 stalk is quite mobile in the ribosome, and is involved in E site tRNA release. Its function is as follows. Protein L1 is also a translational repressor protein, it controls the translation of the L11 operon by binding to its mRNA. This chain is Large ribosomal subunit protein uL1, found in Rhodopirellula baltica (strain DSM 10527 / NCIMB 13988 / SH1).